Reading from the N-terminus, the 527-residue chain is FAD-dependent monooxygenase CTB5 (527 aa).

An FAD-binding PCMH-type domain is found at 78-255 (SDLHPSCIAL…TAVTLKTFGQ (178 aa)).

It belongs to the oxygen-dependent FAD-linked oxidoreductase family.

Its pathway is mycotoxin biosynthesis. FAD-dependent monooxygenase; part of the gene cluster that mediates the biosynthesis of cercosporin, a light-activated, non-host-selective toxin. The perylenequinone chromophore of cercosporin absorbs light energy to attain an electronically-activated triplet state and produces active oxygen species such as the hydroxyl radical, superoxide, hydrogen peroxide or singlet oxygen upon reaction with oxygen molecules. These reactive oxygen species cause damage to various cellular components including lipids, proteins and nucleic acids. The first step of cercosporin biosynthesis is performed by the polyketide synthase CTB1 which catalyzes the formation of nor-toralactone. The starter unit acyltransferase (SAT) domain of CTB1 initiates polyketide extension by the selective utilization of acetyl-CoA, which is elongated to the heptaketide in the beta-ketoacyl synthase (KS) domain by successive condensations with six malonyl units introduced by the malonyl acyltransferase (MAT) domain. The product template (PT) domain catalyzes C4-C9 and C2-C11 aldol cyclizations and dehydrations to a trihydroxynaphthalene, which is thought to be delivered to the thioesterase (TE) domain for product release. The bifunctional enzyme CTB3 then methylates nor-toralactone to toralactone before conducting an unusual oxidative aromatic ring opening. The O-methyltransferase CTB2 further methylates the nascent OH-6 of the CBT3 product, blocking further oxidation at this site before the reductase CTB6 reduces the 2-oxopropyl ketone at position C7, giving naphthalene. The FAD-dependent monooxygenase CTB5 in concert with the multicopper oxidase CTB12 are responsible for homodimerization of naphthalene with CTB7 installing the dioxepine moiety, finally producing cercosporin. The fasciclin domain-containing protein CTB11 might act with CTB5 and CTB12 whereas the roles of CTB9 and CTB10 have still to be elucidated. This chain is FAD-dependent monooxygenase CTB5, found in Cercospora beticola (Sugarbeet leaf spot fungus).